A 307-amino-acid chain; its full sequence is Porphobilinogen deaminase (307 aa).

The residue at position 239 (Cys-239) is an S-(dipyrrolylmethanemethyl)cysteine.

This sequence belongs to the HMBS family. As to quaternary structure, monomer. Dipyrromethane serves as cofactor.

It carries out the reaction 4 porphobilinogen + H2O = hydroxymethylbilane + 4 NH4(+). Its pathway is porphyrin-containing compound metabolism; protoporphyrin-IX biosynthesis; coproporphyrinogen-III from 5-aminolevulinate: step 2/4. In terms of biological role, tetrapolymerization of the monopyrrole PBG into the hydroxymethylbilane pre-uroporphyrinogen in several discrete steps. This Campylobacter jejuni subsp. jejuni serotype O:2 (strain ATCC 700819 / NCTC 11168) protein is Porphobilinogen deaminase (hemC).